A 146-amino-acid chain; its full sequence is Large ribosomal subunit protein bL9 (146 aa).

It belongs to the bacterial ribosomal protein bL9 family.

Its function is as follows. Binds to the 23S rRNA. This chain is Large ribosomal subunit protein bL9, found in Flavobacterium johnsoniae (strain ATCC 17061 / DSM 2064 / JCM 8514 / BCRC 14874 / CCUG 350202 / NBRC 14942 / NCIMB 11054 / UW101) (Cytophaga johnsonae).